Consider the following 164-residue polypeptide: MGQKKTMGTERSRGGKRGPQPGAERPEEPGATFSKKPPEGARAPRCLSRPTAPKSGACLARRRPPGSPCSIRDAPFHTGDDRFLARENFPNVLQPLPRMFAVQQAADFESQCPRRWDSRKRPSEGLPSAGWGRWRGRPIHLGLWVSGSVRRKVSGSHVSRSLHL.

Positions 1 to 77 (MGQKKTMGTE…PCSIRDAPFH (77 aa)) are disordered.

This is an uncharacterized protein from Homo sapiens (Human).